Here is a 149-residue protein sequence, read N- to C-terminus: Large ribosomal subunit protein bL9 (149 aa).

This sequence belongs to the bacterial ribosomal protein bL9 family.

Binds to the 23S rRNA. This chain is Large ribosomal subunit protein bL9, found in Aliivibrio salmonicida (strain LFI1238) (Vibrio salmonicida (strain LFI1238)).